We begin with the raw amino-acid sequence, 36 residues long: Pancreatic polypeptide (36 aa).

Tyrosine 36 is subject to Tyrosine amide.

The protein belongs to the NPY family.

It is found in the secreted. Functionally, hormone secreted by pancreatic cells that acts as a regulator of pancreatic and gastrointestinal functions. The polypeptide is Pancreatic polypeptide (PPY) (Struthio camelus (Common ostrich)).